The sequence spans 283 residues: 2-dehydro-3-deoxyphosphooctonate aldolase (283 aa).

This sequence belongs to the KdsA family.

The protein resides in the cytoplasm. The enzyme catalyses D-arabinose 5-phosphate + phosphoenolpyruvate + H2O = 3-deoxy-alpha-D-manno-2-octulosonate-8-phosphate + phosphate. It participates in carbohydrate biosynthesis; 3-deoxy-D-manno-octulosonate biosynthesis; 3-deoxy-D-manno-octulosonate from D-ribulose 5-phosphate: step 2/3. The protein operates within bacterial outer membrane biogenesis; lipopolysaccharide biosynthesis. The sequence is that of 2-dehydro-3-deoxyphosphooctonate aldolase from Vibrio cholerae serotype O1 (strain ATCC 39315 / El Tor Inaba N16961).